The chain runs to 601 residues: Membrane protein insertase YidC (601 aa).

A helical membrane pass occupies residues 10–30 (ISISLVILVLFQVIASYVLPP). The tract at residues 34 to 63 (APPHPATQTAQTQPVSGQPAPGVPAPSAVP) is disordered. A compositionally biased stretch (low complexity) spans 39–53 (ATQTAQTQPVSGQPA). The span at 54–63 (PGVPAPSAVP) shows a compositional bias: pro residues. A run of 4 helical transmembrane segments spans residues 382–404 (FGNM…FPLV), 455–475 (LPML…FISI), 510–530 (ALSP…TMWG), and 549–569 (FMPV…VLYY).

The protein belongs to the OXA1/ALB3/YidC family. Type 1 subfamily. As to quaternary structure, interacts with the Sec translocase complex via SecD. Specifically interacts with transmembrane segments of nascent integral membrane proteins during membrane integration.

The protein resides in the cell inner membrane. Functionally, required for the insertion and/or proper folding and/or complex formation of integral membrane proteins into the membrane. Involved in integration of membrane proteins that insert both dependently and independently of the Sec translocase complex, as well as at least some lipoproteins. Aids folding of multispanning membrane proteins. In Acidiphilium cryptum (strain JF-5), this protein is Membrane protein insertase YidC.